Reading from the N-terminus, the 106-residue chain is uncharacterized protein (106 aa).

The protein localises to the mitochondrion. This is an uncharacterized protein from Claviceps purpurea (Ergot fungus).